The sequence spans 562 residues: Oligo-1,6-glucosidase (562 aa).

Residues D21, N23, D25, and D29 each contribute to the Ca(2+) site. Catalysis depends on D199, which acts as the Nucleophile. E256 functions as the Proton donor in the catalytic mechanism.

It belongs to the glycosyl hydrolase 13 family.

The protein resides in the cytoplasm. It catalyses the reaction Hydrolysis of (1-&gt;6)-alpha-D-glucosidic linkages in some oligosaccharides produced from starch and glycogen by alpha-amylase, and in isomaltose.. The polypeptide is Oligo-1,6-glucosidase (malL) (Parageobacillus thermoglucosidasius (Geobacillus thermoglucosidasius)).